The following is a 115-amino-acid chain: Regulator of ribonuclease activity B (115 aa).

Belongs to the RraB family. In terms of assembly, interacts with the C-terminal region of Rne.

The protein localises to the cytoplasm. In terms of biological role, globally modulates RNA abundance by binding to RNase E (Rne) and regulating its endonucleolytic activity. Can modulate Rne action in a substrate-dependent manner by altering the composition of the degradosome. The sequence is that of Regulator of ribonuclease activity B from Aeromonas salmonicida (strain A449).